Reading from the N-terminus, the 677-residue chain is MGDSHVDTSSTVSEAVAEEVSLFSMTDMILFSLIVGLLTYWFLFRKKKEEVPEFTKIQTLTSSVRESSFVEKMKKTGRNIIVFYGSQTGTAEEFANRLSKDAHRYGMRGMSADPEEYDLADLSSLPEIDNALVVFCMATYGEGDPTDNAQDFYDWLQETDVDLSGVKFAVFGLGNKTYEHFNAMGKYVDKRLEQLGAQRIFELGLGDDDGNLEEDFITWREQFWPAVCEHFGVEATGEESSIRQYELVVHTDIDAAKVYMGEMGRLKSYENQKPPFDAKNPFLAAVTTNRKLNQGTERHLMHLELDISDSKIRYESGDHVAVYPANDSALVNQLGKILGADLDVVMSLNNLDEESNKKHPFPCPTSYRTALTYYLDITNPPRTNVLYELAQYASEPSEQELLRKMASSSGEGKELYLSWVVEARRHILAILQDCPSLRPPIDHLCELLPRLQARYYSIASSSKVHPNSVHICAVVVEYETKAGRINKGVATNWLRAKEPAGENGGRALVPMFVRKSQFRLPFKATTPVIMVGPGTGVAPFIGFIQERAWLRQQGKEVGETLLYYGCRRSDEDYLYREELAQFHRDGALTQLNVAFSREQSHKVYVQHLLKQDREHLWKLIEGGAHIYVCGDARNMARDVQNTFYDIVAELGAMEHAQAVDYIKKLMTKGRYSLDVWS.

An N-acetylglycine modification is found at glycine 2. The Lumenal segment spans residues 2-21 (GDSHVDTSSTVSEAVAEEVS). A helical membrane pass occupies residues 22–42 (LFSMTDMILFSLIVGLLTYWF). Topologically, residues 43–677 (LFRKKKEEVP…KGRYSLDVWS (635 aa)) are cytoplasmic. Serine 63 carries the phosphoserine modification. In terms of domain architecture, Flavodoxin-like spans 80-224 (IIVFYGSQTG…DFITWREQFW (145 aa)). Residues 86–91 (SQTGTA), 138–141 (ATYG), 173–182 (LGNKTYEHFN), and aspartate 208 contribute to the FMN site. Residues 279 to 521 (KNPFLAAVTT…FVRKSQFRLP (243 aa)) form the FAD-binding FR-type domain. Arginine 298 provides a ligand contact to NADP(+). Residues arginine 424, 454–457 (RYYS), 472–474 (CAV), tyrosine 478, and 488–491 (GVAT) each bind FAD. NADP(+)-binding positions include threonine 535, 596-597 (SR), 602-606 (KVYVQ), and aspartate 638. Tryptophan 676 lines the FAD pocket.

The protein belongs to the NADPH--cytochrome P450 reductase family. This sequence in the N-terminal section; belongs to the flavodoxin family. It in the C-terminal section; belongs to the flavoprotein pyridine nucleotide cytochrome reductase family. The cofactor is FAD. It depends on FMN as a cofactor.

It localises to the endoplasmic reticulum membrane. It catalyses the reaction 2 oxidized [cytochrome P450] + NADPH = 2 reduced [cytochrome P450] + NADP(+) + H(+). In terms of biological role, this enzyme is required for electron transfer from NADP to cytochrome P450 in microsomes. It can also provide electron transfer to heme oxygenase and cytochrome B5. In Homo sapiens (Human), this protein is NADPH--cytochrome P450 reductase.